Reading from the N-terminus, the 379-residue chain is MSEDESNSVSCSLSLESDGYSDEEYDTNLNKLIENESLNWIFVGGKGGVGKTTTSCSIAVQLSKRRESVLLLSTDPAHNTSDAFNQKFTNQPTLINSFDNLYCMEIDTNYSENTAFKLNKKEMFDNILPELLHSFPGIDEALCFAELMQSIKNMKYSVIVFDTAPTGHTLRLLAFPDLLKKALGYLINIREKLKGTLNVLKNFTNNEMEFDSLYEKINHLNAMSSSIQANFQNPMKTTFVCVCIPEFLSVYETERLIQELTKKNISCYNIVVNQVVFPLDSPNVNLENCKNLLSQIKNEQIQSYFNDLISKTEELEDVYISRRKLQSKYLTQIKNLYSNDFHIVCMPQLKNEIRGLNNISSFSEMLLQSKDIPIYKDNL.

The interval 1 to 20 (MSEDESNSVSCSLSLESDGY) is disordered. Low complexity predominate over residues 7 to 18 (NSVSCSLSLESD). An ATP-binding site is contributed by 46-53 (KGGVGKTT). The active site involves D75. 2 residues coordinate ATP: E246 and N273.

This sequence belongs to the arsA ATPase family. As to quaternary structure, homodimer.

It is found in the cytoplasm. Its subcellular location is the endoplasmic reticulum. ATPase required for the post-translational delivery of tail-anchored (TA) proteins to the endoplasmic reticulum. Recognizes and selectively binds the transmembrane domain of TA proteins in the cytosol. This complex then targets to the endoplasmic reticulum by membrane-bound receptors, where the tail-anchored protein is released for insertion. This process is regulated by ATP binding and hydrolysis. ATP binding drives the homodimer towards the closed dimer state, facilitating recognition of newly synthesized TA membrane proteins. ATP hydrolysis is required for insertion. Subsequently, the homodimer reverts towards the open dimer state, lowering its affinity for the membrane-bound receptor, and returning it to the cytosol to initiate a new round of targeting. In Plasmodium falciparum (isolate 3D7), this protein is ATPase ASNA1 homolog.